The primary structure comprises 476 residues: Glycogen synthase (476 aa).

Lysine 15 is a binding site for ADP-alpha-D-glucose.

This sequence belongs to the glycosyltransferase 1 family. Bacterial/plant glycogen synthase subfamily.

It catalyses the reaction [(1-&gt;4)-alpha-D-glucosyl](n) + ADP-alpha-D-glucose = [(1-&gt;4)-alpha-D-glucosyl](n+1) + ADP + H(+). The protein operates within glycan biosynthesis; glycogen biosynthesis. In terms of biological role, synthesizes alpha-1,4-glucan chains using ADP-glucose. The chain is Glycogen synthase from Streptococcus gordonii (strain Challis / ATCC 35105 / BCRC 15272 / CH1 / DL1 / V288).